The chain runs to 545 residues: Dual specificity calcium/calmodulin-dependent 3',5'-cyclic nucleotide phosphodiesterase 1A (545 aa).

2 calmodulin-binding regions span residues 24–44 (TEKM…QLEK) and 114–137 (EKPK…MYRK). In terms of domain architecture, PDEase spans 142-522 (VGLTYPAAVI…ERWKELAAQG (381 aa)). The active-site Proton donor is the histidine 219. Zn(2+) is bound by residues histidine 223, histidine 259, aspartate 260, and aspartate 366. Aspartate 260 is a binding site for Mg(2+). The segment at 526–545 (LHKNSEELGNTEEKHADTRP) is disordered.

Belongs to the cyclic nucleotide phosphodiesterase family. PDE1 subfamily. In terms of assembly, homodimer. Interacts with YWHAZ. Requires Zn(2+) as cofactor. Mg(2+) is required as a cofactor. As to expression, expressed in brain, kidney and testis.

It localises to the cell projection. It is found in the cilium. Its subcellular location is the flagellum. It catalyses the reaction a nucleoside 3',5'-cyclic phosphate + H2O = a nucleoside 5'-phosphate + H(+). The catalysed reaction is 3',5'-cyclic GMP + H2O = GMP + H(+). The enzyme catalyses 3',5'-cyclic AMP + H2O = AMP + H(+). With respect to regulation, type I PDE are activated by the binding of calmodulin in the presence of Ca(2+). Activated by the binding of calmodulin in the presence of Ca(2+). Calcium/calmodulin-dependent cyclic nucleotide phosphodiesterase with a dual specificity for the second messengers cGMP and cAMP, which are key regulators of many important physiological processes. Has a higher efficiency with cGMP compared to cAMP. The protein is Dual specificity calcium/calmodulin-dependent 3',5'-cyclic nucleotide phosphodiesterase 1A of Mus musculus (Mouse).